The chain runs to 112 residues: uncharacterized protein (112 aa).

Residues 70–112 form a disordered region; the sequence is GLYRGRRPPGRDAARPTTAILFAQGRPPLLDQRAPTRRGSHQR.

This is an uncharacterized protein from Homo sapiens (Human).